The chain runs to 140 residues: Acyl-coenzyme A thioesterase 13 (140 aa).

Methionine 1 carries the N-acetylmethionine modification. 3 positions are modified to N6-acetyllysine: lysine 27, lysine 37, and lysine 43. Glutamate 46 provides a ligand contact to CoA. Positions 50 and 81 each coordinate substrate. Residues serine 83, 90 to 95 (YMSPAK), and 108 to 113 (KQGKTL) each bind CoA. N6-acetyllysine occurs at positions 108 and 127. Histidine 137 contributes to the CoA binding site.

Belongs to the thioesterase PaaI family. Homotetramer. Interacts with PCTP. In terms of tissue distribution, highly expressed in the kidney and moderately in the heart, liver, brain, small and large intestine. Also expressed in brown adipose tissue.

It localises to the cytoplasm. Its subcellular location is the cytosol. The protein resides in the mitochondrion. It is found in the nucleus. The protein localises to the cytoskeleton. It localises to the spindle. The enzyme catalyses a fatty acyl-CoA + H2O = a fatty acid + CoA + H(+). It catalyses the reaction decanoyl-CoA + H2O = decanoate + CoA + H(+). The catalysed reaction is octanoyl-CoA + H2O = octanoate + CoA + H(+). It carries out the reaction butanoyl-CoA + H2O = butanoate + CoA + H(+). The enzyme catalyses hexanoyl-CoA + H2O = hexanoate + CoA + H(+). It catalyses the reaction tetradecanoyl-CoA + H2O = tetradecanoate + CoA + H(+). The catalysed reaction is hexadecanoyl-CoA + H2O = hexadecanoate + CoA + H(+). It carries out the reaction dodecanoyl-CoA + H2O = dodecanoate + CoA + H(+). The enzyme catalyses (9Z)-octadecenoyl-CoA + H2O = (9Z)-octadecenoate + CoA + H(+). Its function is as follows. Catalyzes the hydrolysis of acyl-CoAs into free fatty acids and coenzyme A (CoASH), regulating their respective intracellular levels. Has acyl-CoA thioesterase activity towards medium (C12) and long-chain (C18) fatty acyl-CoA substrates. Can also hydrolyze 3-hydroxyphenylacetyl-CoA and 3,4-dihydroxyphenylacetyl-CoA (in vitro). May play a role in controlling adaptive thermogenesis. The chain is Acyl-coenzyme A thioesterase 13 from Mus musculus (Mouse).